We begin with the raw amino-acid sequence, 1602 residues long: MVQKKFCPRLLDYLVIVGARHPSSDSVAQTPELLRRYPLEDHPEFPLPPDVVFFCQPEGCLSVRQRRMSLRDDTSFVFTLTDKDTGVTRYGICVNFYRSFQKRMPKEKAEGGAGPRGKEGAHAPCASEEAATESSESGSTLQPPSADSTPDVNQSPRGKRRAKAGNRSRNSTLTSLCVLSHYPFFSTFRECLYTLKRLVDCCSERLLGKKPGIPRGVQRDTMWRIFTGSLLVEEKSSALLHDLREIEAWIYRLLRSPVPVSGQKRVDIEVLPQEVQQALTFALPDPSRFTLVDFPLHLPLELLGVDACLQVLTCILLEHKVVLQSRDYNALSMSVMAFVAMIYPLEYMFPVIPLLPTCMASAEQLLLAPTPYIIGVPASFFLYKLDFKMPDDVWLVDLDSNRVIAPTNAEVLPILPEPESLELKKHLKQALASMSLNTQPILNLEKFHEGQETPLLLGRFSNDLQSTPSTEFNPLIYGNDVDSVDVATRVAMVRFFNSANVLQGFQMHTRTLRLFPRPVVAFQAGSFLASRPRQTPFAEKLARTQAVEYFGEWILNPSNYAFQRIHNNTFDPALIGDKPKWYAHQLQPIHYRVYDSNSQLAEALSVPPERDSESDPTDDSGSDSMDYDDSSSSYSSLGDFVSEMMKCDINGDTPNVDPLTHAALGDASEVEIDELQPQKEGEEPGPDSENSQENLPLRSSSSTTASSSPSTIVHGAHSEPADSTEVGDKAATGISKPLPPVPPSICKSTVDRRQTETGEGSVCQRTYDHPYFEPQYGSPAEEDDDEQGESYTPRFSQHASGSRAQKLLRPNSLKLASDSDAESDSRASSPNSTVSNNSTEGFGGIMSFASSLYRNHSTSFSLSNLTLPTKGAREKTTPFPSLKGNRRALVDQKSSVIKHSPTVKREPPSPQGRSSNSSENQQFLKEVVHSVLDGQGVGWLNMKKVRRLLESEQLRVFVLSKLSRAVQSEDDARQDVIQDVEISRKVYKGMLDLLKCTVLSLEQSYAHAGLGGMASIFGLLEIAQTHYYSKEPDKRKRSPTENVNTPVGKDPGLAGRGDPKAMAQLRVPQLGPRAPSATGRGPKELDTRSLKEENFVASVGPEVIKPVFDLGETEEKKSQISADSGVSLASASQRTDQDSVIGVSPAVMIRSSSQDSEVSNSSGETLGADSDLSSNAGDGPGGEGSAHLASSRATLSDSEIETNSATSTIFGKAHSLKPKEKPASSPVRSSEDVSQRVYLYEGLLGRDKGSMWDQLEDAAMETFSISKERSTLWDQMQFWEDAFLDAVMLEREGMGMDQGPQEMIDRYLSLGEHDRKRLEDDEDRLLATLLHNLISYMLLMKVNKNDIRKKVRRLMGKSHVGLVYSQQINEVLDQLTNLNGRDLSIRSSGSRHMKKQTFVVHAGTDTNGDIFFMEVCDDCVVLRSNIGTVYERWWYEKLINMTYCPKTKVLCLWRRNGSETQLNKFYTKKCRELYYCVKDSMERAAARQQSIKPGPELGGEFPVQDMKTGEGGLLQVTLEGINLKFMHNQVFIELNHIKKCNTVRGVFVLEEFVPEIKEVVSHKYKTPMAHEICYSVLCLFSYVAAVRSSEEDLRTPPRPVSS.

One can recognise a uDENN domain in the interval 13–267; that stretch reads YLVIVGARHP…VPVSGQKRVD (255 aa). Basic and acidic residues predominate over residues 105–121; sequence PKEKAEGGAGPRGKEGA. Residues 105 to 167 are disordered; the sequence is PKEKAEGGAG…GKRRAKAGNR (63 aa). Residues 126–137 show a composition bias toward low complexity; that stretch reads ASEEAATESSES. The span at 138–156 shows a compositional bias: polar residues; that stretch reads GSTLQPPSADSTPDVNQSP. Residue Ser-155 is modified to Phosphoserine. The segment covering 157–166 has biased composition (basic residues); it reads RGKRRAKAGN. Residues 288-428 enclose the cDENN domain; it reads RFTLVDFPLH…ESLELKKHLK (141 aa). Positions 430-564 constitute a dDENN domain; it reads ALASMSLNTQ…LNPSNYAFQR (135 aa). Disordered stretches follow at residues 603–635 and 676–840; these read ALSV…SSYS and QPQK…NSTE. Residues 614-629 are compositionally biased toward acidic residues; it reads SDPTDDSGSDSMDYDD. Residues Ser-688 and Ser-691 each carry the phosphoserine modification. Residues 688–698 are compositionally biased toward polar residues; it reads SENSQENLPLR. Positions 699–711 are enriched in low complexity; it reads SSSSTTASSSPST. Residue Ser-778 is modified to Phosphoserine. The segment covering 789 to 803 has biased composition (polar residues); it reads ESYTPRFSQHASGSR. Ser-812, Ser-817, and Ser-819 each carry phosphoserine. Residues 826-839 are compositionally biased toward low complexity; sequence RASSPNSTVSNNST. Phosphoserine occurs at positions 857, 861, 895, 900, and 909. Disordered regions lie at residues 870–920, 1030–1089, and 1113–1231; these read KGAR…SSEN, KEPD…DTRS, and TEEK…RSSE. The segment covering 911 to 920 has biased composition (polar residues); it reads QGRSSNSSEN. Ser-1038 carries the phosphoserine modification. Phosphothreonine is present on residues Thr-1040 and Thr-1045. A Phosphoserine modification is found at Ser-1089. Positions 1119–1134 are enriched in polar residues; it reads QISADSGVSLASASQR. The span at 1151–1162 shows a compositional bias: low complexity; the sequence is SSSQDSEVSNSS. The segment covering 1191 to 1209 has biased composition (polar residues); it reads SRATLSDSEIETNSATSTI. Thr-1194 carries the phosphothreonine modification. A phosphoserine mark is found at Ser-1196 and Ser-1225. One can recognise a Death domain in the interval 1295–1370; it reads GMDQGPQEMI…GLVYSQQINE (76 aa).

Belongs to the MADD family. In terms of assembly, interacts (via death domain) with TNFRSF1A (via death domain). Interacts with PIDD1. Interacts with YWHAZ. Interacts (via death domain) with KIF1B; links the motor KIF1B to Rab3-carrying vesicles in anterograde synaptic vesicle transport. Interacts with KIF1A. Interacts (via uDENN domain) with RAB3A, RAB3B, RAB3C and RAB3D; the GTP-bound form of the Rab proteins is preferred for interaction. Expressed in all tissues examined with the highest expression in brain.

The protein localises to the cell membrane. Its subcellular location is the cytoplasm. It is found in the cell projection. The protein resides in the axon. In terms of biological role, guanyl-nucleotide exchange factor that regulates small GTPases of the Rab family. Converts GDP-bound inactive form of RAB27A and RAB27B to the GTP-bound active forms. Converts GDP-bound inactive form of RAB3A, RAB3C and RAB3D to the GTP-bound active forms, GTPases involved in synaptic vesicle exocytosis and vesicle secretion. Plays a role in synaptic vesicle formation and in vesicle trafficking at the neuromuscular junction. Involved in up-regulating a post-docking step of synaptic exocytosis in central synapses. Probably by binding to the motor proteins KIF1B and KIF1A, mediates motor-dependent transport of GTP-RAB3A-positive vesicles to the presynaptic nerve terminals. Plays a role in TNFA-mediated activation of the MAPK pathway, including ERK1/2. May link TNFRSF1A with MAP kinase activation. May be involved in the regulation of TNFA-induced apoptosis. This chain is MAP kinase-activating death domain protein, found in Rattus norvegicus (Rat).